The primary structure comprises 430 residues: Phosphoribosylamine--glycine ligase (430 aa).

In terms of domain architecture, ATP-grasp spans 109–316 (KDFMARHGIP…LLDLIEAALN (208 aa)). 135–196 (VRQQGAPIVI…EEYLDGEEAS (62 aa)) is an ATP binding site. Residues Glu-286 and Asn-288 each contribute to the Mg(2+) site.

This sequence belongs to the GARS family. Mg(2+) is required as a cofactor. Requires Mn(2+) as cofactor.

It catalyses the reaction 5-phospho-beta-D-ribosylamine + glycine + ATP = N(1)-(5-phospho-beta-D-ribosyl)glycinamide + ADP + phosphate + H(+). The protein operates within purine metabolism; IMP biosynthesis via de novo pathway; N(1)-(5-phospho-D-ribosyl)glycinamide from 5-phospho-alpha-D-ribose 1-diphosphate: step 2/2. This chain is Phosphoribosylamine--glycine ligase, found in Xylella fastidiosa (strain Temecula1 / ATCC 700964).